A 294-amino-acid polypeptide reads, in one-letter code: Acetylglutamate kinase (294 aa).

Substrate-binding positions include 47–48 (GG), R69, and N168.

The protein belongs to the acetylglutamate kinase family. ArgB subfamily.

Its subcellular location is the cytoplasm. It carries out the reaction N-acetyl-L-glutamate + ATP = N-acetyl-L-glutamyl 5-phosphate + ADP. It participates in amino-acid biosynthesis; L-arginine biosynthesis; N(2)-acetyl-L-ornithine from L-glutamate: step 2/4. Catalyzes the ATP-dependent phosphorylation of N-acetyl-L-glutamate. The polypeptide is Acetylglutamate kinase (Corynebacterium glutamicum (strain ATCC 13032 / DSM 20300 / JCM 1318 / BCRC 11384 / CCUG 27702 / LMG 3730 / NBRC 12168 / NCIMB 10025 / NRRL B-2784 / 534)).